Consider the following 167-residue polypeptide: Ribosome maturation factor RimM (167 aa).

The PRC barrel domain maps to 94-165 (ENEYYYSDII…KIIITPMEGL (72 aa)).

The protein belongs to the RimM family. In terms of assembly, binds ribosomal protein uS19.

It is found in the cytoplasm. Functionally, an accessory protein needed during the final step in the assembly of 30S ribosomal subunit, possibly for assembly of the head region. Essential for efficient processing of 16S rRNA. May be needed both before and after RbfA during the maturation of 16S rRNA. It has affinity for free ribosomal 30S subunits but not for 70S ribosomes. The protein is Ribosome maturation factor RimM of Staphylococcus aureus (strain bovine RF122 / ET3-1).